Consider the following 154-residue polypeptide: MSTNKINKKSIARIAAVQALYQNILQNNYDMYDIMQNILACYHSNSIDLPKNFKISLSISHFKMLVKSVFENINKLDEIIDNHLTNDKDPVHMPILLRALLRVSICELLFCSTTPAKVVINEYTDIANDLLNEHEIGFVNSILDKIAQENNKIS.

It belongs to the NusB family.

Functionally, involved in transcription antitermination. Required for transcription of ribosomal RNA (rRNA) genes. Binds specifically to the boxA antiterminator sequence of the ribosomal RNA (rrn) operons. This Rickettsia typhi (strain ATCC VR-144 / Wilmington) protein is Transcription antitermination protein NusB.